Consider the following 404-residue polypeptide: Protein L-Myc-1b (404 aa).

Disordered regions lie at residues 175-195 (KKQVSSGSESRTDSSDDEEID) and 238-331 (QQHN…FLER). Positions 287 to 315 (VPAQSPTVSASPTHTSYHLKSQPSSPQSS) are enriched in polar residues. Residues 321-373 (DKRKTHNFLERKRRNDLRSRFLALRDEIPGLVDCPKTPKVVILTKATEYLRTL) form the bHLH domain. Residues 373 to 401 (LHVSDRQKAQEKKQLKSKQQQLLRRLAEL) form a leucine-zipper region.

As to quaternary structure, efficient DNA binding requires dimerization with another bHLH protein. Binds DNA as a heterodimer with max.

The protein localises to the nucleus. The protein is Protein L-Myc-1b of Danio rerio (Zebrafish).